Reading from the N-terminus, the 274-residue chain is 2,3,4,5-tetrahydropyridine-2,6-dicarboxylate N-succinyltransferase (274 aa).

Substrate contacts are provided by Arg-105 and Asp-142.

Belongs to the transferase hexapeptide repeat family. Homotrimer.

The protein resides in the cytoplasm. The catalysed reaction is (S)-2,3,4,5-tetrahydrodipicolinate + succinyl-CoA + H2O = (S)-2-succinylamino-6-oxoheptanedioate + CoA. It participates in amino-acid biosynthesis; L-lysine biosynthesis via DAP pathway; LL-2,6-diaminopimelate from (S)-tetrahydrodipicolinate (succinylase route): step 1/3. The protein is 2,3,4,5-tetrahydropyridine-2,6-dicarboxylate N-succinyltransferase of Methylobacillus flagellatus (strain ATCC 51484 / DSM 6875 / VKM B-1610 / KT).